The chain runs to 220 residues: 2-hydroxy-3-keto-5-methylthiopentenyl-1-phosphate phosphatase (220 aa).

The protein belongs to the HAD-like hydrolase superfamily. MtnX family.

The enzyme catalyses 2-hydroxy-5-methylsulfanyl-3-oxopent-1-enyl phosphate + H2O = 1,2-dihydroxy-5-(methylsulfanyl)pent-1-en-3-one + phosphate. It participates in amino-acid biosynthesis; L-methionine biosynthesis via salvage pathway; L-methionine from S-methyl-5-thio-alpha-D-ribose 1-phosphate: step 4/6. Dephosphorylates 2-hydroxy-3-keto-5-methylthiopentenyl-1-phosphate (HK-MTPenyl-1-P) yielding 1,2-dihydroxy-3-keto-5-methylthiopentene (DHK-MTPene). The protein is 2-hydroxy-3-keto-5-methylthiopentenyl-1-phosphate phosphatase of Geobacillus kaustophilus (strain HTA426).